The chain runs to 491 residues: Glutamyl-tRNA(Gln) amidotransferase subunit A (491 aa).

Catalysis depends on charge relay system residues K76 and S154. S178 serves as the catalytic Acyl-ester intermediate.

It belongs to the amidase family. GatA subfamily. As to quaternary structure, heterotrimer of A, B and C subunits.

The catalysed reaction is L-glutamyl-tRNA(Gln) + L-glutamine + ATP + H2O = L-glutaminyl-tRNA(Gln) + L-glutamate + ADP + phosphate + H(+). Its function is as follows. Allows the formation of correctly charged Gln-tRNA(Gln) through the transamidation of misacylated Glu-tRNA(Gln) in organisms which lack glutaminyl-tRNA synthetase. The reaction takes place in the presence of glutamine and ATP through an activated gamma-phospho-Glu-tRNA(Gln). The sequence is that of Glutamyl-tRNA(Gln) amidotransferase subunit A from Cereibacter sphaeroides (strain KD131 / KCTC 12085) (Rhodobacter sphaeroides).